The following is a 185-amino-acid chain: Ribosome-recycling factor (185 aa).

Belongs to the RRF family.

Its subcellular location is the cytoplasm. In terms of biological role, responsible for the release of ribosomes from messenger RNA at the termination of protein biosynthesis. May increase the efficiency of translation by recycling ribosomes from one round of translation to another. The protein is Ribosome-recycling factor of Helicobacter pylori (strain Shi470).